Consider the following 304-residue polypeptide: Probable phytol kinase 2, chloroplastic (304 aa).

The transit peptide at 1–59 (MVSLISAHLLSLPSSAPRSRPQSRPPLSPPAAAAAASCSFDLPRPRRLVADGSRRKGTM) directs the protein to the chloroplast. The next 7 helical transmembrane spans lie at 68–88 (SGLAHDLGSAAVTAGVALALL), 113–133 (IGMVFLLFWPLFSSGSYAPFL), 134–154 (AAVAPGINIIRMLLLGLGVMK), 170–190 (ELLKGPLYYATTITFATSIFW), 194–214 (PIAIALICNLCAGDGIADIVG), 231–251 (AGSIAMALAGFMASIGYMHYF), and 256–276 (FIEESWSLAFGFLVVSVTAAL).

It belongs to the polyprenol kinase family.

The protein localises to the plastid. Its subcellular location is the chloroplast membrane. It catalyses the reaction phytol + CTP = phytyl phosphate + CDP + H(+). Its pathway is cofactor biosynthesis; tocopherol biosynthesis. Its function is as follows. Involved in the activation and reutilization of phytol from chlorophyll degradation in plant metabolism, including tocopherol biosynthesis. Catalyzes the conversion of phytol to phytol monophosphate (PMP). The sequence is that of Probable phytol kinase 2, chloroplastic from Oryza sativa subsp. japonica (Rice).